Consider the following 281-residue polypeptide: Bifunctional protein FolD (281 aa).

Residues 159 to 161 (NRS), serine 184, and isoleucine 225 each bind NADP(+).

Belongs to the tetrahydrofolate dehydrogenase/cyclohydrolase family. In terms of assembly, homodimer.

It carries out the reaction (6R)-5,10-methylene-5,6,7,8-tetrahydrofolate + NADP(+) = (6R)-5,10-methenyltetrahydrofolate + NADPH. The enzyme catalyses (6R)-5,10-methenyltetrahydrofolate + H2O = (6R)-10-formyltetrahydrofolate + H(+). The protein operates within one-carbon metabolism; tetrahydrofolate interconversion. Functionally, catalyzes the oxidation of 5,10-methylenetetrahydrofolate to 5,10-methenyltetrahydrofolate and then the hydrolysis of 5,10-methenyltetrahydrofolate to 10-formyltetrahydrofolate. The polypeptide is Bifunctional protein FolD (Thermoplasma volcanium (strain ATCC 51530 / DSM 4299 / JCM 9571 / NBRC 15438 / GSS1)).